Consider the following 373-residue polypeptide: Probable G-protein coupled receptor 173 (373 aa).

Over 1–26 (MANTTGEPEEVSGALSPPSAVAYVKL) the chain is Extracellular. N3 carries an N-linked (GlcNAc...) asparagine glycan. Residues 27 to 47 (VLLGLIMCVSLAGNAILSLLV) form a helical membrane-spanning segment. Over 48-59 (LKDRALHKAPYY) the chain is Cytoplasmic. A helical transmembrane segment spans residues 60–80 (FLLDLCLADGIRSAVCFPFVL). Residues 81-97 (ASVRHGSSWTFSALSCK) lie on the Extracellular side of the membrane. A disulfide bridge connects residues C96 and C174. The chain crosses the membrane as a helical span at residues 98-118 (IVAFMAVLFCFHAAFMLFCIS). Topologically, residues 119-139 (VTRYMAIAHHRFYAKRMTLWT) are cytoplasmic. The chain crosses the membrane as a helical span at residues 140 to 160 (CAAVICMAWTLSVAMAFPPVF). The Extracellular portion of the chain corresponds to 161 to 188 (DVGTYKFIREEDQCIFEHRYFKANDTLG). N-linked (GlcNAc...) asparagine glycosylation is present at N184. A helical membrane pass occupies residues 189-209 (FMLMLAVLMAATHAVYGKLLL). At 210-287 (FEYRHRKMKP…VKGEKQLGRM (78 aa)) the chain is on the cytoplasmic side. Residues 288–308 (FYAITLLFLLLWSPYIVACYW) form a helical membrane-spanning segment. Residues 309-322 (RVFVKACAVPHRYL) are Extracellular-facing. A helical transmembrane segment spans residues 323–343 (ATAVWMSFAQAAVNPIVCFLL). The Cytoplasmic segment spans residues 344–373 (NKDLKKCLRTHAPCWGTGGAPAPREPYCVM).

It belongs to the G-protein coupled receptor 1 family.

It is found in the cell membrane. In terms of biological role, is a receptor for the SMIM20 derived peptides Phoenixin-14 and Phoenixin-20. It mediates the Phoenixin-14 and Phoenixin-20 augmentation of gonadotropin-releasing hormone (GNRH) signaling in the hypothalamus and pituitary gland. In the ovary, it mediates the effects of Phoenixin-14 and Phoenixin-20 induced granulosa cell proliferation during follicular growth. The protein is Probable G-protein coupled receptor 173 (GPR173) of Bos taurus (Bovine).